The following is a 1070-amino-acid chain: MDSAPPSPSPSPAPAYAELHCLTNFSFQRGASHPEELVARAAEAGYTALAITDECSLAGVVRAHQQLRRLARPLKLLIGSELRLVDGLRVVLLATDRAAYGRLARLITIGRRAATKGRYQLTCADLDRGIPGCLALVVPPDDRILDAAALVADARWVGERFPDAAWLAVELACGPDDGRRLEALLAIASAAGLPPVAATGALMHDPSRRALADVLAALRLRVTIAEAGRALAPNAERALHERAVLARRYPAELLAETLRIVARCHFRLDELRYEYPAELVPDGETPASWLRRLVEDGLRWRHGRPQDDLAPPKVRAQVEHELALIAELGFEAYFLTVEDLVRFARGRGILCQGRGSAANSVICWALGITEVDPELGIMLVERFISKERDEPPDIDVDFEHERREEVIQYVYRKYGRERAALAATVIRYRARSALRDVGRALGLPPGQLERLARDRFWFDAGRIRPERLREAGFDPASPGVQRLATLTEALVGFPRHLSQHVGGFVIARGRLDELVPVENAAMPERTVIQWDKDDLDALGLLKIDVLALGMLSALRRSLALVSTWRGRPFTLADIPREAPEVYRMLSEADSIGVFQIESRAQMTMLPRLKPARFYDLVVQVAIVRPGPIQGGMVHPYLQARARIERDEPVSYPQPHCPDADADGTCVPRPDDVRRVLERTLGVPIFQEQVMQLAVVAAGFTPGEADQLRRAMGAFRRHGELERYRAKLLAGMAARGYRAEFAERLCDQIEGFGSYGFPESHAASFALLVYCSAWLKCCEPAAFLCGLLNSQPMGFYAPSQLIQDARRHGVVVLGAEVTASDWDCTLEALPDASPGAAPAVRLGLQLVKGFGREAAMRIVAARTERPFPNVDELALRARLDAAALKRLAEAGALEPLAGHRRQALWQAAAGHAPEGVLRGARIAEPRAELAAPSEAQELVADYARLGFTLGRHPLALLRAKLTTLRFVTAAEIRDYPDRKLARIAGLVTCRQRPGTAKGTLFLTVEDETGLANVIVQAELVERQRREVLGARLLGVFGQIRSKGQVVHLLAQRLVDHSALLGALEARSRDFQ.

Belongs to the DNA polymerase type-C family. DnaE2 subfamily.

The protein localises to the cytoplasm. The enzyme catalyses DNA(n) + a 2'-deoxyribonucleoside 5'-triphosphate = DNA(n+1) + diphosphate. Its function is as follows. DNA polymerase involved in damage-induced mutagenesis and translesion synthesis (TLS). It is not the major replicative DNA polymerase. The protein is Error-prone DNA polymerase of Aromatoleum aromaticum (strain DSM 19018 / LMG 30748 / EbN1) (Azoarcus sp. (strain EbN1)).